Reading from the N-terminus, the 256-residue chain is DNA repair protein RecO (256 aa).

Belongs to the RecO family.

Its function is as follows. Involved in DNA repair and RecF pathway recombination. The protein is DNA repair protein RecO of Desulforamulus reducens (strain ATCC BAA-1160 / DSM 100696 / MI-1) (Desulfotomaculum reducens).